The chain runs to 82 residues: MKVAILFLSILVLAVASESIEESRDDFAVEELGRATCAGQDQTCKVTCDCCGERGECVCGGPCICRQGNFLIAWYKLASCKK.

An N-terminal signal peptide occupies residues 1 to 17 (MKVAILFLSILVLAVAS). The propeptide occupies 18-34 (ESIEESRDDFAVEELGR). 5 cysteine pairs are disulfide-bonded: cysteine 37-cysteine 51, cysteine 44-cysteine 57, cysteine 48-cysteine 80, cysteine 50-cysteine 65, and cysteine 59-cysteine 63.

In terms of tissue distribution, expressed by the venom gland.

The protein localises to the secreted. In terms of biological role, reversible inhibitor of voltage-gated sodium channels (Nav). Delays the fast inactivation kinetics of neuronal-type sodium channels. In vivo, it induces rat penile erection. This effect may be due to the neuronal nitric oxide synthase (NOS1), since one of its selective inhibitor completely abolishes all the toxic effects of the toxin. This toxin also causes scratching, lacrimation, hypersalivation, sweating and agitation followed by spastic paralysis of the anterior and posterior extremities and death at dose levels of 0.24 mg/mouse. It is also insecticidal to the larval and adult forms of the house fly. In Phoneutria nigriventer (Brazilian armed spider), this protein is Delta-ctenitoxin-Pn2c.